The following is a 435-amino-acid chain: Ribosomal protein uS12 methylthiotransferase RimO (435 aa).

The MTTase N-terminal domain maps to 3–115; it reads KKLHVVSLGC…IDELISQKKS (113 aa). Cysteine 12, cysteine 46, cysteine 78, cysteine 146, cysteine 150, and cysteine 153 together coordinate [4Fe-4S] cluster. The Radical SAM core domain maps to 132 to 361; sequence TGSNYHAYIK…DAIVKKQQMK (230 aa).

It belongs to the methylthiotransferase family. RimO subfamily. [4Fe-4S] cluster serves as cofactor.

Its subcellular location is the cytoplasm. The catalysed reaction is L-aspartate(89)-[ribosomal protein uS12]-hydrogen + (sulfur carrier)-SH + AH2 + 2 S-adenosyl-L-methionine = 3-methylsulfanyl-L-aspartate(89)-[ribosomal protein uS12]-hydrogen + (sulfur carrier)-H + 5'-deoxyadenosine + L-methionine + A + S-adenosyl-L-homocysteine + 2 H(+). Catalyzes the methylthiolation of an aspartic acid residue of ribosomal protein uS12. This chain is Ribosomal protein uS12 methylthiotransferase RimO, found in Nitratiruptor sp. (strain SB155-2).